The following is a 210-amino-acid chain: Thymidylate kinase (210 aa).

ATP is bound at residue glycine 10–serine 17.

It belongs to the thymidylate kinase family.

It catalyses the reaction dTMP + ATP = dTDP + ADP. Its function is as follows. Phosphorylation of dTMP to form dTDP in both de novo and salvage pathways of dTTP synthesis. The polypeptide is Thymidylate kinase (Pseudomonas fluorescens (strain ATCC BAA-477 / NRRL B-23932 / Pf-5)).